We begin with the raw amino-acid sequence, 162 residues long: Protein FAM167B (162 aa).

The protein belongs to the FAM167 (SEC) family.

This is Protein FAM167B (Fam167b) from Mus musculus (Mouse).